The chain runs to 499 residues: Lysine--tRNA ligase (499 aa).

Mg(2+) contacts are provided by Glu-408 and Glu-415.

Belongs to the class-II aminoacyl-tRNA synthetase family. Homodimer. Mg(2+) is required as a cofactor.

It localises to the cytoplasm. The catalysed reaction is tRNA(Lys) + L-lysine + ATP = L-lysyl-tRNA(Lys) + AMP + diphosphate. The sequence is that of Lysine--tRNA ligase from Bacillus thuringiensis (strain Al Hakam).